The sequence spans 232 residues: U-scoloptoxin(11)-Ssd2a (232 aa).

The signal sequence occupies residues 1–21 (MFQFCLLILLLAPGRFFSALG). The propeptide occupies 22–32 (KPQETLTVENR).

Contains 8 disulfide bonds. As to expression, expressed by the venom gland.

The protein localises to the secreted. The sequence is that of U-scoloptoxin(11)-Ssd2a from Scolopendra dehaani (Thai centipede).